Consider the following 403-residue polypeptide: S-adenosylmethionine synthase (403 aa).

141 to 146 (GQGSVD) is a binding site for ATP.

Belongs to the AdoMet synthase 2 family. Mg(2+) serves as cofactor.

The enzyme catalyses L-methionine + ATP + H2O = S-adenosyl-L-methionine + phosphate + diphosphate. It participates in amino-acid biosynthesis; S-adenosyl-L-methionine biosynthesis; S-adenosyl-L-methionine from L-methionine: step 1/1. In terms of biological role, catalyzes the formation of S-adenosylmethionine from methionine and ATP. This chain is S-adenosylmethionine synthase, found in Methanococcus aeolicus (strain ATCC BAA-1280 / DSM 17508 / OCM 812 / Nankai-3).